The sequence spans 188 residues: Elongation factor P (188 aa).

It belongs to the elongation factor P family.

It is found in the cytoplasm. It participates in protein biosynthesis; polypeptide chain elongation. In terms of biological role, involved in peptide bond synthesis. Stimulates efficient translation and peptide-bond synthesis on native or reconstituted 70S ribosomes in vitro. Probably functions indirectly by altering the affinity of the ribosome for aminoacyl-tRNA, thus increasing their reactivity as acceptors for peptidyl transferase. The chain is Elongation factor P from Rhodopseudomonas palustris (strain TIE-1).